We begin with the raw amino-acid sequence, 245 residues long: 4-hydroxy-tetrahydrodipicolinate reductase (245 aa).

NAD(+) is bound by residues 7 to 12 (GAKGKV), 75 to 77 (GTT), and 102 to 105 (APNF). His132 functions as the Proton donor/acceptor in the catalytic mechanism. His133 serves as a coordination point for (S)-2,3,4,5-tetrahydrodipicolinate. Lys136 functions as the Proton donor in the catalytic mechanism. A (S)-2,3,4,5-tetrahydrodipicolinate-binding site is contributed by 142–143 (GT).

This sequence belongs to the DapB family.

The protein resides in the cytoplasm. The catalysed reaction is (S)-2,3,4,5-tetrahydrodipicolinate + NAD(+) + H2O = (2S,4S)-4-hydroxy-2,3,4,5-tetrahydrodipicolinate + NADH + H(+). It carries out the reaction (S)-2,3,4,5-tetrahydrodipicolinate + NADP(+) + H2O = (2S,4S)-4-hydroxy-2,3,4,5-tetrahydrodipicolinate + NADPH + H(+). The protein operates within amino-acid biosynthesis; L-lysine biosynthesis via DAP pathway; (S)-tetrahydrodipicolinate from L-aspartate: step 4/4. Functionally, catalyzes the conversion of 4-hydroxy-tetrahydrodipicolinate (HTPA) to tetrahydrodipicolinate. This chain is 4-hydroxy-tetrahydrodipicolinate reductase, found in Mycobacterium marinum (strain ATCC BAA-535 / M).